The chain runs to 421 residues: E3 ubiquitin protein ligase DRIP1 (421 aa).

Residues 16-57 (CSICDNILRDATTISECLHTFCRKCIYEKITEDEIETCPVCN) form an RING-type zinc finger. Composition is skewed to polar residues over residues 106 to 121 (ISSL…AQAG) and 157 to 172 (ESTS…TQNK). Disordered stretches follow at residues 106–198 (ISSL…WDSK) and 216–307 (PLKS…QERR). Over residues 178–198 (SCKESISNKENKDGDEPWDSK) the composition is skewed to basic and acidic residues. A compositionally biased stretch (low complexity) spans 218 to 227 (KSSASQGSGS). Over residues 244–253 (TKTKNKKRKC) the composition is skewed to basic residues. The span at 262–271 (NGDPTTSETV) shows a compositional bias: polar residues. A compositionally biased stretch (basic residues) spans 274 to 284 (KRMRTTQRKRS). Over residues 285–294 (ATTLGDSRNL) the composition is skewed to polar residues.

Interacts with DREB2A. In terms of processing, autoubiquitinated. Expressed in roots, leaves and flowers.

Its subcellular location is the nucleus. It carries out the reaction S-ubiquitinyl-[E2 ubiquitin-conjugating enzyme]-L-cysteine + [acceptor protein]-L-lysine = [E2 ubiquitin-conjugating enzyme]-L-cysteine + N(6)-ubiquitinyl-[acceptor protein]-L-lysine.. It participates in protein modification; protein ubiquitination. In terms of biological role, E3 ubiquitin-protein ligase that acts as a negative regulator of the response to water stress. Mediates ubiquitination and subsequent proteasomal degradation of the drought-induced transcriptional activator DREB2A. Functionally redundant with DRIP2. In Arabidopsis thaliana (Mouse-ear cress), this protein is E3 ubiquitin protein ligase DRIP1 (DRIP1).